The sequence spans 856 residues: Serine/threonine-protein kinase unc-51 (856 aa).

The region spanning 9 to 275 (YSKRDLLGHG…FEDFFNHPFL (267 aa)) is the Protein kinase domain. Residues 15-23 (LGHGAFAIV) and Lys39 each bind ATP. The active-site Proton acceptor is Asp134. The segment at 304 to 327 (PQSSLPVPKRAGSTKLDSPTPVRR) is disordered. Positions 358 to 361 (FTFL) match the LIR motif. Disordered regions lie at residues 362–391 (PPRQ…PVPV), 405–471 (LAAA…ERMT), and 520–582 (PTTT…PTEP). Polar residues predominate over residues 365-385 (QESSPVKQVQVHTNVSPSLTT). Over residues 411–436 (TAVPSSSSPTGSAVSAQHQHQHQQQQ) the composition is skewed to low complexity. Polar residues-rich tracts occupy residues 527–536 (IPKSATTANI) and 566–578 (KYQQ…SPTA). Residues 750–856 (YHQCLVRSQE…RQGFVAAVNT (107 aa)) are required for interaction with unc-14 and vab-8.

The protein belongs to the protein kinase superfamily. Ser/Thr protein kinase family. APG1/unc-51/ULK1 subfamily. As to quaternary structure, interacts with unc-14 and vab-8. Interacts (via C-terminus) with atg-13. Interacts (via the LIR motif) with lgg-1; the interaction is direct. Mg(2+) is required as a cofactor.

It carries out the reaction L-seryl-[protein] + ATP = O-phospho-L-seryl-[protein] + ADP + H(+). The enzyme catalyses L-threonyl-[protein] + ATP = O-phospho-L-threonyl-[protein] + ADP + H(+). Protein kinase important for axonal elongation and axonal guidance. Functions in the CAN axons to direct both anterior and posterior migrations. Phosphorylates both unc-14 and vab-8. Component of the unc-51/atg-13 complex that is probably recruited by lgg-1 to preautophagosomes and is required for autophagosome formation. Interaction with autophagy related proteins such as atg-13 links it to the autophagy machinery to in turn promote P-granule degradation in somatic cells. Plays a role in mitophagy during limited food availability. Regulates cell size. Plays a role in male tail ray pattern formation. May be required for normal dauer morphogenesis. The protein is Serine/threonine-protein kinase unc-51 of Caenorhabditis elegans.